We begin with the raw amino-acid sequence, 525 residues long: GMP synthase [glutamine-hydrolyzing] (525 aa).

In terms of domain architecture, Glutamine amidotransferase type-1 spans R9 to L207. C86 acts as the Nucleophile in catalysis. Catalysis depends on residues H181 and E183. Positions W208–R400 constitute a GMPS ATP-PPase domain. S235–S241 is a binding site for ATP.

Homodimer.

The catalysed reaction is XMP + L-glutamine + ATP + H2O = GMP + L-glutamate + AMP + diphosphate + 2 H(+). The protein operates within purine metabolism; GMP biosynthesis; GMP from XMP (L-Gln route): step 1/1. Its function is as follows. Catalyzes the synthesis of GMP from XMP. This chain is GMP synthase [glutamine-hydrolyzing], found in Pseudomonas fluorescens (strain SBW25).